A 280-amino-acid polypeptide reads, in one-letter code: UPF0276 protein NGO_1946 (280 aa).

Belongs to the UPF0276 family.

The sequence is that of UPF0276 protein NGO_1946 from Neisseria gonorrhoeae (strain ATCC 700825 / FA 1090).